The primary structure comprises 256 residues: Probable galactose dehydrogenase GalD (256 aa).

Residues 20–23 (GGGS), 71–72 (DL), and N98 contribute to the NAD(+) site. S150 is a binding site for substrate. Y163 acts as the Proton acceptor in catalysis. Residues 163–167 (YSTAK) and I196 each bind NAD(+).

It belongs to the short-chain dehydrogenases/reductases (SDR) family.

In terms of biological role, involved in the degradation of galactose via the DeLey-Doudoroff pathway. Catalyzes the oxidation of galactose in the presence of NAD(+). Uses NAD(+) as a hydrogen acceptor more efficiently than NADP(+). The chain is Probable galactose dehydrogenase GalD (galD) from Rhizobium meliloti (strain 1021) (Ensifer meliloti).